Here is a 321-residue protein sequence, read N- to C-terminus: Annexin D3 (321 aa).

N-acetylalanine is present on Ala-2. Annexin repeat units follow at residues 11–82 (PSPA…SWTY), 83–159 (DPAE…TLAS), 171–243 (EVAT…VAIF), and 247–318 (TPEK…TLLG). The Ca(2+) site is built by Gly-26, Gly-28, and Glu-68. Thr-117 is modified (phosphothreonine). Ca(2+)-binding residues include Ile-260 and Gly-264. Phosphotyrosine is present on Tyr-289. Ca(2+) is bound at residue Asp-304.

It belongs to the annexin (TC 1.A.31.1) family. Expressed mainly in roots and flowers. Lower in stems and leaves.

The sequence is that of Annexin D3 (ANN3) from Arabidopsis thaliana (Mouse-ear cress).